Reading from the N-terminus, the 121-residue chain is Large ribosomal subunit protein bL12 (121 aa).

Belongs to the bacterial ribosomal protein bL12 family. As to quaternary structure, homodimer. Part of the ribosomal stalk of the 50S ribosomal subunit. Forms a multimeric L10(L12)X complex, where L10 forms an elongated spine to which 2 to 4 L12 dimers bind in a sequential fashion. Binds GTP-bound translation factors.

Functionally, forms part of the ribosomal stalk which helps the ribosome interact with GTP-bound translation factors. Is thus essential for accurate translation. This is Large ribosomal subunit protein bL12 from Pectobacterium atrosepticum (strain SCRI 1043 / ATCC BAA-672) (Erwinia carotovora subsp. atroseptica).